The sequence spans 396 residues: MIISAASDYRAAAQRILPPFLFHYMDGGAYSEYTLRRNVEDLSEVALRQRILKNMSDLSLETTLFNEKLSMPVALGPVGLCGMYARRGEVQAAKAADAHGIPFTLSTVSVCPIEEVAPAIKRPMWFQLYVLRDRGFMRNALERAKAAGCSTLVFTVDMPTPGARYRDAHSGMSGPNAAMRRYLQAVTHPQWAWDVGLNGRPHDLGNISAYLGKPTGLEDYIGWLGNNFDPSISWKDLEWIRDFWDGPMVIKGILDPEDARDAVRFGADGIVVSNHGGRQLDGVLSSARALPAIADAVKGDIAILADSGIRNGLDVVRMIALGADTVLLGRAFLYALATAGQAGVANLLNLIEKEMKVAMTLTGAKSISEITQDSLVQGLGKELPAALAPMAKGNAA.

In terms of domain architecture, FMN hydroxy acid dehydrogenase spans 1-380 (MIISAASDYR…TQDSLVQGLG (380 aa)). Tyrosine 24 provides a ligand contact to substrate. 2 residues coordinate FMN: serine 106 and glutamine 127. Tyrosine 129 lines the substrate pocket. Threonine 155 contacts FMN. Residue arginine 164 participates in substrate binding. An FMN-binding site is contributed by lysine 251. The active-site Proton acceptor is histidine 275. Arginine 278 lines the substrate pocket. Residue 306–330 (DSGIRNGLDVVRMIALGADTVLLGR) participates in FMN binding.

It belongs to the FMN-dependent alpha-hydroxy acid dehydrogenase family. It depends on FMN as a cofactor.

Its subcellular location is the cell inner membrane. It catalyses the reaction (S)-lactate + A = pyruvate + AH2. In terms of biological role, catalyzes the conversion of L-lactate to pyruvate. Is coupled to the respiratory chain. The sequence is that of L-lactate dehydrogenase from Escherichia coli O7:K1 (strain IAI39 / ExPEC).